The primary structure comprises 958 residues: Coiled-coil domain-containing protein 187 (958 aa).

Residues 116–132 (SSVSSGRMSGSSGGHES) show a composition bias toward low complexity. Disordered regions lie at residues 116-160 (SSVS…SDPR), 345-447 (ELTR…PRFF), 470-492 (QDIS…QRPW), and 510-602 (EPSP…KAQA). Polar residues-rich tracts occupy residues 374–398 (LQST…NSSL) and 470–491 (QDIS…SQRP). Low complexity predominate over residues 536–545 (SSPSSKGKSA). Positions 718–743 (KQARLQALETMAEALRQRVDILTTKL) form a coiled coil. The interval 916-958 (EVKKEGLVTPWTTRSCGKGEPADRPWAGWSGGQGGLPWASSTA) is disordered.

The sequence is that of Coiled-coil domain-containing protein 187 from Mus musculus (Mouse).